Here is an 84-residue protein sequence, read N- to C-terminus: Small ribosomal subunit protein bS18 (84 aa).

The protein belongs to the bacterial ribosomal protein bS18 family. Part of the 30S ribosomal subunit. Forms a tight heterodimer with protein bS6.

Its function is as follows. Binds as a heterodimer with protein bS6 to the central domain of the 16S rRNA, where it helps stabilize the platform of the 30S subunit. The chain is Small ribosomal subunit protein bS18 from Mycobacterium leprae (strain Br4923).